The following is a 63-amino-acid chain: Large ribosomal subunit protein bL28A (63 aa).

It belongs to the bacterial ribosomal protein bL28 family.

The polypeptide is Large ribosomal subunit protein bL28A (Nocardia farcinica (strain IFM 10152)).